The primary structure comprises 502 residues: tRNA (guanine-N(7)-)-methyltransferase non-catalytic subunit trm82 (502 aa).

WD repeat units follow at residues 4 to 58, 95 to 135, and 290 to 330; these read NYQH…SHST, TAWS…HLKQ, and GHTS…LVQK. The segment at 58–93 is disordered; it reads TVVSVAPSSEGDEPSAKKRKVSPVPEQTAKGGQPEA.

The protein belongs to the WD repeat TRM82 family. Forms a heterodimer with the catalytic subunit trm8.

It localises to the nucleus. It participates in tRNA modification; N(7)-methylguanine-tRNA biosynthesis. In terms of biological role, required for the formation of N(7)-methylguanine at position 46 (m7G46) in tRNA. In the complex, it is required to stabilize and induce conformational changes of the catalytic subunit. The sequence is that of tRNA (guanine-N(7)-)-methyltransferase non-catalytic subunit trm82 (trm82) from Aspergillus fumigatus (strain CBS 144.89 / FGSC A1163 / CEA10) (Neosartorya fumigata).